Here is a 617-residue protein sequence, read N- to C-terminus: DNA mismatch repair protein MutL (617 aa).

The segment at 363–394 (YAPAYGARPPQPSAWSVDTSPHRPLDDGQNRF) is disordered. Positions 382 to 392 (SPHRPLDDGQN) are enriched in basic and acidic residues.

Belongs to the DNA mismatch repair MutL/HexB family.

This protein is involved in the repair of mismatches in DNA. It is required for dam-dependent methyl-directed DNA mismatch repair. May act as a 'molecular matchmaker', a protein that promotes the formation of a stable complex between two or more DNA-binding proteins in an ATP-dependent manner without itself being part of a final effector complex. The sequence is that of DNA mismatch repair protein MutL from Allorhizobium ampelinum (strain ATCC BAA-846 / DSM 112012 / S4) (Agrobacterium vitis (strain S4)).